A 300-amino-acid polypeptide reads, in one-letter code: Cation-efflux pump FieF (300 aa).

Helical transmembrane passes span 12–32 (AALA…FAWW), 39–59 (ILAA…NLLV), 82–102 (AALA…LTGI), and 114–134 (PLVG…LVTF). Positions 45 and 49 each coordinate Zn(2+). Positions 153 and 157 each coordinate Zn(2+). 2 helical membrane passes run 156–176 (SDVM…YGLH) and 182–202 (FALG…YEAI).

This sequence belongs to the cation diffusion facilitator (CDF) transporter (TC 2.A.4) family. FieF subfamily. In terms of assembly, homodimer.

The protein localises to the cell inner membrane. The catalysed reaction is Zn(2+)(in) + H(+)(out) = Zn(2+)(out) + H(+)(in). It carries out the reaction Cd(2+)(in) + H(+)(out) = Cd(2+)(out) + H(+)(in). The enzyme catalyses Fe(2+)(in) + H(+)(out) = Fe(2+)(out) + H(+)(in). Its function is as follows. Divalent metal cation transporter which exports Zn(2+), Cd(2+) and possibly Fe(2+). May be involved in zinc and iron detoxification by efflux. This is Cation-efflux pump FieF from Cronobacter sakazakii (strain ATCC BAA-894) (Enterobacter sakazakii).